The sequence spans 120 residues: MNVLSGIGEFLVLFGTVFYFLSTLGLIRMPDVYNRMQTATKSVTLGSLSTIIGVGLWALGEGLSLAWLTKTIVIAVFLLLTNPISAHTLIRGAYKSGIPLWEGSVVDKYKEHLKEKEGAE.

The protein belongs to the UPF0091 family.

This chain is UPF0091 protein PH1455, found in Pyrococcus horikoshii (strain ATCC 700860 / DSM 12428 / JCM 9974 / NBRC 100139 / OT-3).